We begin with the raw amino-acid sequence, 338 residues long: UDP-N-acetylenolpyruvoylglucosamine reductase (338 aa).

Positions 17–188 (IAARTDWWID…MYVDYRLRLK (172 aa)) constitute an FAD-binding PCMH-type domain. The active site involves R164. S237 acts as the Proton donor in catalysis. Residue E333 is part of the active site.

This sequence belongs to the MurB family. FAD is required as a cofactor.

It localises to the cytoplasm. The enzyme catalyses UDP-N-acetyl-alpha-D-muramate + NADP(+) = UDP-N-acetyl-3-O-(1-carboxyvinyl)-alpha-D-glucosamine + NADPH + H(+). Its pathway is cell wall biogenesis; peptidoglycan biosynthesis. Cell wall formation. The protein is UDP-N-acetylenolpyruvoylglucosamine reductase of Porphyromonas gingivalis (strain ATCC BAA-308 / W83).